A 283-amino-acid chain; its full sequence is MSTSGTLTSYYVDSLILPENEELSVPRYSAGPGHQHSRQPASIGDPHSELGTCSFPSKPPVFGPSWSHVPAQFPGTVSSVYHHHYGHHQGPVGTETDGRYQSWLLEPMSGSLPMAGLPTTHHYGIKPDGLGVRSGGALPGSHTALLLSDYANGTVATAPPVEKDAVSSHTGDGVDTEEKPGLDPSKSAVYITFYLYRTYSGDRDNPVSNWLHASATRKKRCPYTKHQILELEKEFLFNTYLTRDRRYEVARLLNLTERQVKIWFQNRRMKMKKFNKDGAPKDD.

2 disordered regions span residues 25-54 and 162-181; these read VPRY…GTCS and EKDA…EKPG. A DNA-binding region (homeobox) is located at residues 216-275; sequence TRKKRCPYTKHQILELEKEFLFNTYLTRDRRYEVARLLNLTERQVKIWFQNRRMKMKKFN.

Belongs to the Abd-B homeobox family.

It is found in the nucleus. Its function is as follows. Sequence-specific transcription factor which is part of a developmental regulatory system that provides cells with specific positional identities on the anterior-posterior axis. The polypeptide is Homeobox protein Hox-A9a (hoxa9a) (Takifugu rubripes (Japanese pufferfish)).